A 213-amino-acid chain; its full sequence is Ergothioneine transport ATP-binding protein EgtV (213 aa).

In terms of domain architecture, ABC transporter spans 5 to 212 (VTIENVSFNY…ATKTLEIKAL (208 aa)). Position 37 to 44 (37 to 44 (GESGSGKS)) interacts with ATP.

Belongs to the ABC transporter superfamily. In terms of assembly, the complex is composed of two ATP-binding proteins (EgtV) and two transmembrane proteins (EgtU).

The protein resides in the cell inner membrane. The enzyme catalyses ergothioneine(out) + ATP + H2O = ergothioneine(in) + ADP + phosphate + H(+). Part of the ABC transporter complex EgtUV involved in the uptake of ergothioneine (EGT), a natural low-molecular weight (LMW) thiol antioxidant which protects H.pylori against bleach stress. Responsible for energy coupling to the transport system. In Helicobacter pylori (strain G27), this protein is Ergothioneine transport ATP-binding protein EgtV.